The following is a 196-amino-acid chain: GTP cyclohydrolase 1 (196 aa).

Residues C86, H89, and C158 each contribute to the Zn(2+) site.

Belongs to the GTP cyclohydrolase I family. Homomer.

It catalyses the reaction GTP + H2O = 7,8-dihydroneopterin 3'-triphosphate + formate + H(+). It participates in cofactor biosynthesis; 7,8-dihydroneopterin triphosphate biosynthesis; 7,8-dihydroneopterin triphosphate from GTP: step 1/1. The protein is GTP cyclohydrolase 1 of Clostridium botulinum (strain Kyoto / Type A2).